Consider the following 120-residue polypeptide: Prefoldin subunit beta (120 aa).

It belongs to the prefoldin subunit beta family. Heterohexamer of two alpha and four beta subunits.

The protein resides in the cytoplasm. Its function is as follows. Molecular chaperone capable of stabilizing a range of proteins. Seems to fulfill an ATP-independent, HSP70-like function in archaeal de novo protein folding. The sequence is that of Prefoldin subunit beta from Methanospirillum hungatei JF-1 (strain ATCC 27890 / DSM 864 / NBRC 100397 / JF-1).